Here is a 796-residue protein sequence, read N- to C-terminus: Nuclear GTPase SLIP-GC (796 aa).

Residues 1 to 22 (MAETKDVFGQEPHPVEDDLYKE) are compositionally biased toward basic and acidic residues. Residues 1 to 35 (MAETKDVFGQEPHPVEDDLYKERTRKRRKSDRDQR) form a disordered region. 107–114 (GSTGAGKS) lines the GTP pocket. Coiled coils occupy residues 158 to 185 (SDQE…EEAD) and 745 to 775 (KELA…RLRK).

As to expression, expressed in germinal center B-cell and in lymphomas derived from germinal center B-cell.

Its subcellular location is the nucleus speckle. Nuclear GTPase found in germinal center B-cells, where it may inhibit function of the activation-induced cytidine deaminase AICDA. Reduces somatic hypermutation in B-cells which may enhance genome stability. In Homo sapiens (Human), this protein is Nuclear GTPase SLIP-GC (NUGGC).